The primary structure comprises 429 residues: MVNSIHLEPRQHCRGTVTLPGSKSIANRALLMAALCQTPVILHNLLVSDDTSRMREALNALGVSFEDDKLITRVNGLGGGWNKPASELYLGNAGTAMRPLIAVLAATLKNEHQAVVLKGDARMHERPVKHLIDAIQPRGAGVNYLGETGFPPLEMTSGLKPGDFEIDGSVSSQFISALLMALPLLPGDSTLTLKGNVVSRPYIELTLQMLSDFGISIKEDSPQCYAIPGGQCYQSPGEYWVEGDASAASYWMAAALLGKGPVEIIGVGKNSIQGDKRFAEVIEAMGASVSYRKNSMTVSGTGSVQGIDQDFNDIPDAAMTVAPLALFANKPTTIRNVANWRVKETDRLHAMATELRKLGATVDEGEDFLRIEPLKHWRHIAIDTYDDHRMAMCFSLVAFSSAGVTINDPGCCAKTYPDYFSEFSRLCHS.

K23, S24, and R28 together coordinate 3-phosphoshikimate. Phosphoenolpyruvate is bound at residue K23. The phosphoenolpyruvate site is built by G94 and R126. 7 residues coordinate 3-phosphoshikimate: S171, S172, Q173, S199, D316, N339, and K343. Residue Q173 participates in phosphoenolpyruvate binding. D316 serves as the catalytic Proton acceptor. Residues R347, R389, and K414 each contribute to the phosphoenolpyruvate site.

This sequence belongs to the EPSP synthase family. Monomer.

It is found in the cytoplasm. It carries out the reaction 3-phosphoshikimate + phosphoenolpyruvate = 5-O-(1-carboxyvinyl)-3-phosphoshikimate + phosphate. The protein operates within metabolic intermediate biosynthesis; chorismate biosynthesis; chorismate from D-erythrose 4-phosphate and phosphoenolpyruvate: step 6/7. Its function is as follows. Catalyzes the transfer of the enolpyruvyl moiety of phosphoenolpyruvate (PEP) to the 5-hydroxyl of shikimate-3-phosphate (S3P) to produce enolpyruvyl shikimate-3-phosphate and inorganic phosphate. In Idiomarina loihiensis (strain ATCC BAA-735 / DSM 15497 / L2-TR), this protein is 3-phosphoshikimate 1-carboxyvinyltransferase.